A 163-amino-acid polypeptide reads, in one-letter code: Nucleotide-binding protein YajQ (163 aa).

The protein belongs to the YajQ family.

Its function is as follows. Nucleotide-binding protein. The protein is Nucleotide-binding protein YajQ of Escherichia coli O81 (strain ED1a).